Here is a 311-residue protein sequence, read N- to C-terminus: tRNA dimethylallyltransferase (311 aa).

An ATP-binding site is contributed by 11–18 (GPTAVGKT). 13–18 (TAVGKT) contacts substrate. An interaction with substrate tRNA region spans residues 36–39 (DSVQ).

The protein belongs to the IPP transferase family. Monomer. The cofactor is Mg(2+).

It carries out the reaction adenosine(37) in tRNA + dimethylallyl diphosphate = N(6)-dimethylallyladenosine(37) in tRNA + diphosphate. Catalyzes the transfer of a dimethylallyl group onto the adenine at position 37 in tRNAs that read codons beginning with uridine, leading to the formation of N6-(dimethylallyl)adenosine (i(6)A). In Exiguobacterium sp. (strain ATCC BAA-1283 / AT1b), this protein is tRNA dimethylallyltransferase.